A 269-amino-acid polypeptide reads, in one-letter code: Cytochrome c oxidase subunit 3 (269 aa).

6 helical membrane-spanning segments follow: residues 46 to 66 (NSYY…AFWF), 90 to 110 (GVIL…WAFF), 138 to 160 (PLLN…HSLI), 167 to 187 (ALYG…FQGV), 207 to 227 (FGTG…AVAL), and 247 to 267 (ILYW…IYYW).

It belongs to the cytochrome c oxidase subunit 3 family. Component of the cytochrome c oxidase (complex IV, CIV), a multisubunit enzyme composed of a catalytic core of 3 subunits and several supernumerary subunits. The complex exists as a monomer or a dimer and forms supercomplexes (SCs) in the inner mitochondrial membrane with ubiquinol-cytochrome c oxidoreductase (cytochrome b-c1 complex, complex III, CIII).

The protein localises to the mitochondrion inner membrane. It catalyses the reaction 4 Fe(II)-[cytochrome c] + O2 + 8 H(+)(in) = 4 Fe(III)-[cytochrome c] + 2 H2O + 4 H(+)(out). Component of the cytochrome c oxidase, the last enzyme in the mitochondrial electron transport chain which drives oxidative phosphorylation. The respiratory chain contains 3 multisubunit complexes succinate dehydrogenase (complex II, CII), ubiquinol-cytochrome c oxidoreductase (cytochrome b-c1 complex, complex III, CIII) and cytochrome c oxidase (complex IV, CIV), that cooperate to transfer electrons derived from NADH and succinate to molecular oxygen, creating an electrochemical gradient over the inner membrane that drives transmembrane transport and the ATP synthase. Cytochrome c oxidase is the component of the respiratory chain that catalyzes the reduction of oxygen to water. Electrons originating from reduced cytochrome c in the intermembrane space (IMS) are transferred via the dinuclear copper A center (CU(A)) of subunit 2 and heme A of subunit 1 to the active site in subunit 1, a binuclear center (BNC) formed by heme A3 and copper B (CU(B)). The BNC reduces molecular oxygen to 2 water molecules using 4 electrons from cytochrome c in the IMS and 4 protons from the mitochondrial matrix. This chain is Cytochrome c oxidase subunit 3 (COIII), found in Podospora anserina (strain S / ATCC MYA-4624 / DSM 980 / FGSC 10383) (Pleurage anserina).